The chain runs to 94 residues: Co-chaperonin GroES (94 aa).

This sequence belongs to the GroES chaperonin family. In terms of assembly, heptamer of 7 subunits arranged in a ring. Interacts with the chaperonin GroEL.

The protein resides in the cytoplasm. In terms of biological role, together with the chaperonin GroEL, plays an essential role in assisting protein folding. The GroEL-GroES system forms a nano-cage that allows encapsulation of the non-native substrate proteins and provides a physical environment optimized to promote and accelerate protein folding. GroES binds to the apical surface of the GroEL ring, thereby capping the opening of the GroEL channel. The polypeptide is Co-chaperonin GroES (Caldanaerobacter subterraneus subsp. tengcongensis (strain DSM 15242 / JCM 11007 / NBRC 100824 / MB4) (Thermoanaerobacter tengcongensis)).